The chain runs to 687 residues: Dentin sialophosphoprotein (687 aa).

The signal sequence occupies residues 1-17 (MKTKIIIYICIWATAWA). Residues 54–113 (NNATNDDSPKGSELGRQVHSNGGYERDRNGSESIAVGGKSSPTQPILANAQGNSAKERED) are disordered. Asn55 carries N-linked (GlcNAc...) asparagine glycosylation. The residue at position 57 (Thr57) is a Phosphothreonine; by CK2. Residue Asn82 is glycosylated (N-linked (GlcNAc...) asparagine). Residues 93 to 107 (SSPTQPILANAQGNS) show a composition bias toward polar residues. Asn128 is a glycosylation site (N-linked (GlcNAc...) asparagine). Basic and acidic residues predominate over residues 146–160 (EAKESKVHGQPHQDT). The segment at 146–687 (EAKESKVHGQ…SDSNHSTSDD (542 aa)) is disordered. A compositionally biased stretch (polar residues) spans 161–194 (KTGLASDTSQNGDATLVQENEPQVAGSKNSTNHE). N-linked (GlcNAc...) asparagine glycosylation occurs at Asn189. Position 226 is a phosphoserine; by CK2 (Ser226). Position 253 is a phosphoserine; by CK1 (Ser253). Positions 262 to 275 (GDGRESHDGTEGHE) are enriched in basic and acidic residues. Over residues 276–292 (GQSSGGNNDNRGQGSVS) the composition is skewed to polar residues. Residue Ser278 is modified to Phosphoserine; by CK1. Ser292 carries the phosphoserine; by CK2 modification. Ser298 carries the post-translational modification Phosphoserine; by CK1. A glycan (N-linked (GlcNAc...) asparagine) is linked at Asn312. Residue Ser315 is modified to Phosphoserine; by CK2. Thr319 and Thr329 each carry phosphothreonine; by CK2. Phosphoserine; by CK2 occurs at positions 337 and 345. The span at 352–375 (SGQSQNQGLETEGSSTGNKSSITK) shows a compositional bias: polar residues. Ser366 bears the Phosphoserine; by CK1 mark. The N-linked (GlcNAc...) asparagine glycan is linked to Asn369. Residues 386–417 (SNGHHGMELDKRNSPKQGESDKPQGAAEKSDT) are compositionally biased toward basic and acidic residues. Residues 418 to 432 (HNNMGHSRIGSSSNS) show a composition bias toward polar residues. The segment covering 447-460 (GDDPNSSDESNGSD) has biased composition (low complexity). The segment covering 500-521 (DDSSDDTSDTDDSDSNGDDDSE) has biased composition (acidic residues). A compositionally biased stretch (basic and acidic residues) spans 522 to 545 (SKDKDESDNSNHDNDSDSESKSDS). Over residues 555-598 (SSDSSDSSDSSETSDSSDSSDTSDSSDSSDSSDSSNSSDTSDSS) the composition is skewed to low complexity. The segment covering 599–617 (DSSDGDSSDGDSSDSDSSD) has biased composition (acidic residues). A compositionally biased stretch (low complexity) spans 618–639 (SDSSNSSDSDSSDSSDSSSSDS). Acidic residues predominate over residues 667 to 677 (SDSDSDSDSEG). The span at 678 to 687 (SDSNHSTSDD) shows a compositional bias: low complexity.

In terms of assembly, interacts with FBLN7. In terms of processing, DSP is glycosylated. As to expression, specifically expressed in teeth, mainly in odontoblasts and transiently in pre-ameloblasts.

The protein localises to the secreted. The protein resides in the extracellular space. Its subcellular location is the extracellular matrix. Functionally, DSP may be an important factor in dentinogenesis. DPP may bind high amount of calcium and facilitate initial mineralization of dentin matrix collagen as well as regulate the size and shape of the crystals. In Rattus norvegicus (Rat), this protein is Dentin sialophosphoprotein (Dspp).